The primary structure comprises 184 residues: Adenylate kinase 2 (184 aa).

Residue 10 to 15 (GSGKST) participates in ATP binding. The NMP stretch occupies residues 30-59 (STGEILREAISHLSELGRHAQPYMIKGELV). AMP contacts are provided by residues T31, R36, 57–59 (ELV), 85–88 (GYPR), and Q92. Positions 126–132 (GRSLPDD) are LID. R127 is a binding site for ATP. An AMP-binding site is contributed by R140. Q168 lines the ATP pocket.

This sequence belongs to the adenylate kinase family. As to quaternary structure, monomer.

The protein resides in the cytoplasm. The enzyme catalyses AMP + ATP = 2 ADP. It functions in the pathway purine metabolism; AMP biosynthesis via salvage pathway; AMP from ADP: step 1/1. Its function is as follows. Catalyzes the reversible transfer of the terminal phosphate group between ATP and AMP. Plays an important role in cellular energy homeostasis and in adenine nucleotide metabolism. The protein is Adenylate kinase 2 of Nostoc sp. (strain PCC 7120 / SAG 25.82 / UTEX 2576).